The primary structure comprises 2893 residues: Genome polyprotein (2893 aa).

Positions 206-226 (VQAKPEMDNPNPGPDGEGEVE) are disordered. One can recognise an SF3 helicase domain in the interval 1446-1612 (SKLKTDLMEM…EEKKRGCKHC (167 aa)). 1472-1479 (GASGIGKS) is an ATP binding site. The region spanning 2119 to 2345 (GSTQQVDAAV…VAEPLVHEMF (227 aa)) is the Peptidase C3 domain. Active-site for 3C-like protease activity residues include His2170, Asn2227, and Cys2307. Positions 2633–2763 (THIVTGDYKN…NVSDNMIDKF (131 aa)) constitute a RdRp catalytic domain.

In terms of processing, specific enzymatic cleavages in vivo by the viral 3C-like protease yield three mature proteins. 3C-like protease is cleaved autocatalytically.

It is found in the virion. It carries out the reaction RNA(n) + a ribonucleoside 5'-triphosphate = RNA(n+1) + diphosphate. The enzyme catalyses ATP + H2O = ADP + phosphate + H(+). Its activity is regulated as follows. Inhibited by Rupintrivir. In terms of biological role, capsid protein that assembles with the capsid proteins VP1 and VP3 to form a pseudo-T3 icosahedral capsid of about 40 nm. Functionally, capsid protein that assembles with the capsid proteins VP1 and VP2 to form a pseudo T3 icosahedral capsid of about 40 nm. Capsid protein that assembles with the capsid proteins VP2 and VP3 to form a pseudo T3 icosahedral capsid of about 40 nm. Its function is as follows. Displays RNA helix destabilizing and strand annealing acceleration activity. This activity is necessary at several points during genome replication, for example to separate duplexes that form after genome replication. In terms of biological role, cysteine protease that generates mature viral proteins from the precursor polyprotein. Functionally, replicates genomic and antigenomic RNA. This chain is Genome polyprotein, found in Deformed wing virus (DWV).